A 29-amino-acid chain; its full sequence is Cytochrome b6-f complex subunit 8 (29 aa).

A helical membrane pass occupies residues 3–23 (ITSIAWGALMVVFTFSLSLVV).

This sequence belongs to the PetN family. The 4 large subunits of the cytochrome b6-f complex are cytochrome b6, subunit IV (17 kDa polypeptide, PetD), cytochrome f and the Rieske protein, while the 4 small subunits are PetG, PetL, PetM and PetN. The complex functions as a dimer.

It is found in the plastid membrane. In terms of biological role, component of the cytochrome b6-f complex, which mediates electron transfer between photosystem II (PSII) and photosystem I (PSI), cyclic electron flow around PSI, and state transitions. The polypeptide is Cytochrome b6-f complex subunit 8 (Aneura mirabilis (Parasitic liverwort)).